We begin with the raw amino-acid sequence, 363 residues long: S-adenosylmethionine:tRNA ribosyltransferase-isomerase (363 aa).

This sequence belongs to the QueA family. Monomer.

The protein resides in the cytoplasm. The enzyme catalyses 7-aminomethyl-7-carbaguanosine(34) in tRNA + S-adenosyl-L-methionine = epoxyqueuosine(34) in tRNA + adenine + L-methionine + 2 H(+). It participates in tRNA modification; tRNA-queuosine biosynthesis. Its function is as follows. Transfers and isomerizes the ribose moiety from AdoMet to the 7-aminomethyl group of 7-deazaguanine (preQ1-tRNA) to give epoxyqueuosine (oQ-tRNA). This chain is S-adenosylmethionine:tRNA ribosyltransferase-isomerase, found in Haemophilus influenzae (strain ATCC 51907 / DSM 11121 / KW20 / Rd).